The sequence spans 302 residues: Glycine--tRNA ligase alpha subunit (302 aa).

This sequence belongs to the class-II aminoacyl-tRNA synthetase family. Tetramer of two alpha and two beta subunits.

It localises to the cytoplasm. It catalyses the reaction tRNA(Gly) + glycine + ATP = glycyl-tRNA(Gly) + AMP + diphosphate. In Haemophilus ducreyi (strain 35000HP / ATCC 700724), this protein is Glycine--tRNA ligase alpha subunit.